Here is a 298-residue protein sequence, read N- to C-terminus: Small ribosomal subunit biogenesis GTPase RsgA 1 (298 aa).

In terms of domain architecture, CP-type G spans 63-224 (QTQLVRPPVA…VADTPGFSSY (162 aa)). Residues 112-115 (AKTD) and 167-175 (GQTGAGKST) contribute to the GTP site. The Zn(2+) site is built by Cys-248, Cys-253, His-255, and Cys-261.

The protein belongs to the TRAFAC class YlqF/YawG GTPase family. RsgA subfamily. In terms of assembly, monomer. Associates with 30S ribosomal subunit, binds 16S rRNA. The cofactor is Zn(2+).

It is found in the cytoplasm. Its function is as follows. One of several proteins that assist in the late maturation steps of the functional core of the 30S ribosomal subunit. Helps release RbfA from mature subunits. May play a role in the assembly of ribosomal proteins into the subunit. Circularly permuted GTPase that catalyzes slow GTP hydrolysis, GTPase activity is stimulated by the 30S ribosomal subunit. The protein is Small ribosomal subunit biogenesis GTPase RsgA 1 of Lactiplantibacillus plantarum (strain ATCC BAA-793 / NCIMB 8826 / WCFS1) (Lactobacillus plantarum).